The primary structure comprises 144 residues: Putative pre-16S rRNA nuclease (144 aa).

This sequence belongs to the YqgF nuclease family.

It localises to the cytoplasm. Functionally, could be a nuclease involved in processing of the 5'-end of pre-16S rRNA. This Symbiobacterium thermophilum (strain DSM 24528 / JCM 14929 / IAM 14863 / T) protein is Putative pre-16S rRNA nuclease.